We begin with the raw amino-acid sequence, 123 residues long: Small ribosomal subunit protein uS12 (123 aa).

3-methylthioaspartic acid is present on Asp89. Positions 104-123 are disordered; that stretch reads TAGVQDRRQGRSKYGAKRPK. Residues 113-123 are compositionally biased toward basic residues; sequence GRSKYGAKRPK.

The protein belongs to the universal ribosomal protein uS12 family. As to quaternary structure, part of the 30S ribosomal subunit. Contacts proteins S8 and S17. May interact with IF1 in the 30S initiation complex.

With S4 and S5 plays an important role in translational accuracy. Its function is as follows. Interacts with and stabilizes bases of the 16S rRNA that are involved in tRNA selection in the A site and with the mRNA backbone. Located at the interface of the 30S and 50S subunits, it traverses the body of the 30S subunit contacting proteins on the other side and probably holding the rRNA structure together. The combined cluster of proteins S8, S12 and S17 appears to hold together the shoulder and platform of the 30S subunit. This chain is Small ribosomal subunit protein uS12, found in Oleidesulfovibrio alaskensis (strain ATCC BAA-1058 / DSM 17464 / G20) (Desulfovibrio alaskensis).